Here is a 638-residue protein sequence, read N- to C-terminus: MDLWQLLLTLAVAGSGNAVSGSEATPAILGRASQSLQRVNPGPGTNPSGKPQFTKCRSPELETFSCHWTEGVHHGVKNPGSIQLFYIRRSTQEWTPEWKECPDYVSAGENSCYFNSSYTSIWIPYCIKLTSNGDTVDQKCFSVEEIVQPDPPIGLNWTLLNISLTGIHADIQVRWEPPPNADVQKGWIVLEYELQYKEVNESQWKMMDPVLSTSVPVYSLRLDKEYEVRVRSRQRNSEKYGEFSEVLYVALPQMSPFACEEDFQFPWFLIIIFGIFGLTMILFLFIFSKQQRIKMLILPPVPVPKIKGIDSDLLKEGKLEEVSTILAIHDNYKPEFYNDDSWVEFIELDIDDPDEKTEGSDTDRLLSNDHEKSLNILGAKDDDSGRTSCYEPDILETDFNASDVCDGTSEVAQPQRLKGEIDLLCLDQKNQSNSPSTDTAPNTQQPGVILAKENKPRPLLISGTESTHQAAHPQLSNPSSLANIDFYAQVSDITPAGSVVLSPGQKNKAGIAPCDMPPEVVSLCQANFIMDNAYFCEADAKKCITVAPHVEAESRGEPSFNQEDIYITTESLTTVAGQPGTAERAPSSEIPVPDYTSIHIVQSPRGLVLNATALPLPDKEFLSSCGYVSTDQLNKIMP.

Residues 1 to 18 form the signal peptide; it reads MDLWQLLLTLAVAGSGNA. At 19–264 the chain is on the extracellular side; the sequence is VSGSEATPAI…SPFACEEDFQ (246 aa). 2 cysteine pairs are disulfide-bonded: cysteine 56–cysteine 66 and cysteine 101–cysteine 112. Asparagine 115 is a glycosylation site (N-linked (GlcNAc...) asparagine). The cysteines at positions 126 and 140 are disulfide-linked. Positions 151 to 254 constitute a Fibronectin type-III domain; that stretch reads PPIGLNWTLL…EVLYVALPQM (104 aa). N-linked (GlcNAc...) asparagine glycans are attached at residues asparagine 156, asparagine 161, and asparagine 200. Residues 240–244 carry the WSXWS motif motif; the sequence is YGEFS. The chain crosses the membrane as a helical span at residues 265–288; it reads FPWFLIIIFGIFGLTMILFLFIFS. Over 289–638 the chain is Cytoplasmic; that stretch reads KQQRIKMLIL…STDQLNKIMP (350 aa). The tract at residues 294–379 is required for JAK2 binding; that stretch reads KMLILPPVPV…HEKSLNILGA (86 aa). The Box 1 motif motif lies at 297-305; that stretch reads ILPPVPVPK. The short motif at 340–349 is the UbE motif element; that stretch reads DSWVEFIELD. A Phosphoserine modification is found at serine 341. Positions 429-446 are enriched in polar residues; sequence KNQSNSPSTDTAPNTQQP. Positions 429–448 are disordered; that stretch reads KNQSNSPSTDTAPNTQQPGV. 2 positions are modified to phosphotyrosine: tyrosine 487 and tyrosine 595.

This sequence belongs to the type I cytokine receptor family. Type 1 subfamily. On growth hormone (GH) binding, forms homodimers and binds JAK2 via a box 1-containing domain. The soluble form (GHBP) is produced by phorbol ester-promoted proteolytic cleavage at the cell surface (shedding) by ADAM17/TACE. Shedding is inhibited by growth hormone (GH) binding to the receptor probably due to a conformational change in GHR rendering the receptor inaccessible to ADAM17. In terms of processing, on GH binding, phosphorylated on tyrosine residues in the cytoplasmic domain by JAK2. Post-translationally, ubiquitinated by the ECS(SOCS2) complex following ligand-binding and phosphorylation by JAK2, leading to its degradation by the proteasome. Regulation by the ECS(SOCS2) complex acts as a negative feedback loop of growth hormone receptor signaling. Ubiquitination is not sufficient for GHR internalization.

The protein resides in the cell membrane. It localises to the secreted. Receptor for pituitary gland growth hormone (GH1) involved in regulating postnatal body growth. On ligand binding, couples to the JAK2/STAT5 pathway. Functionally, the soluble form (GHBP) acts as a reservoir of growth hormone in plasma and may be a modulator/inhibitor of GH signaling. The sequence is that of Growth hormone receptor (GHR) from Ailuropoda melanoleuca (Giant panda).